A 412-amino-acid polypeptide reads, in one-letter code: MQIYIVGGAVRDELLGRPNADCDYVVVGATPETMLAQGFRPVGKDFPVFLHPNTHDEYALARTERKTGHGYHGFIFHAAADVTLEEDLARRDLTINAMAKAADGTLVDPFNGQQDLASKTLRHVGPAFAEDPVRILRIARFAARFSDFSVAPETLALMRSMVACGEVDHLVAERVWQELAKGLMEQKPSRMFEVLRDCGALARLLPEVDKLFGVPQRADYHPEIDTGIHTMMVIDQSARRTFTLPVRFAALTHDLGKAETPADILPRHIGHEERSVRLTEQLCARLRVPNDCRDLALLTARYHGNIHRAADLKASTIVTLFEKTDALRRPERFRQLLDACLCDFTGRLGWENRPYDSPQYLLGALAAVASLNAGEIAVACADKTKIPERIHAARVHAIKQLLDNPGEQPEQQ.

The ATP site is built by G8 and R11. 2 residues coordinate CTP: G8 and R11. D21 and D23 together coordinate Mg(2+). ATP contacts are provided by R91, R137, and R140. 3 residues coordinate CTP: R91, R137, and R140. The HD domain occupies 226 to 327; it reads TGIHTMMVID…VTLFEKTDAL (102 aa).

Belongs to the tRNA nucleotidyltransferase/poly(A) polymerase family. Bacterial CCA-adding enzyme type 1 subfamily. Monomer. Can also form homodimers and oligomers. The cofactor is Mg(2+). It depends on Ni(2+) as a cofactor.

The catalysed reaction is a tRNA precursor + 2 CTP + ATP = a tRNA with a 3' CCA end + 3 diphosphate. It carries out the reaction a tRNA with a 3' CCA end + 2 CTP + ATP = a tRNA with a 3' CCACCA end + 3 diphosphate. Functionally, catalyzes the addition and repair of the essential 3'-terminal CCA sequence in tRNAs without using a nucleic acid template. Adds these three nucleotides in the order of C, C, and A to the tRNA nucleotide-73, using CTP and ATP as substrates and producing inorganic pyrophosphate. tRNA 3'-terminal CCA addition is required both for tRNA processing and repair. Also involved in tRNA surveillance by mediating tandem CCA addition to generate a CCACCA at the 3' terminus of unstable tRNAs. While stable tRNAs receive only 3'-terminal CCA, unstable tRNAs are marked with CCACCA and rapidly degraded. This chain is Multifunctional CCA protein, found in Dechloromonas aromatica (strain RCB).